Here is a 230-residue protein sequence, read N- to C-terminus: Lactate utilization protein C (230 aa).

Belongs to the LutC/YkgG family.

Is involved in L-lactate degradation and allows cells to grow with lactate as the sole carbon source. The polypeptide is Lactate utilization protein C (Exiguobacterium sp. (strain ATCC BAA-1283 / AT1b)).